The following is a 1250-amino-acid chain: Myosin-1 (1250 aa).

Residues 1–43 (MGHSRRPAGGEKKSRGFGRSKAAADVGDGRQTGGKPQVKKATF) are disordered. Positions 51–730 (IGVSDLTLLS…TLFALEAMRD (680 aa)) constitute a Myosin motor domain. 144 to 151 (GESGAGKT) contacts ATP. At serine 372 the chain carries Phosphoserine. Residues 419–501 (SIGILDIYGF…PGVFAALNDA (83 aa)) are actin-binding. IQ domains follow at residues 734–754 (HNMAIRIQRAWRNYLRYRTEC) and 755–780 (AIRIQRFWRRTTGGLEFIKLRDQGHQ). The TH1 domain maps to 788-978 (RRRMSLLGSR…TIHTGPGEPA (191 aa)). 2 disordered regions span residues 962 to 1079 (DDSY…PKKP) and 1126 to 1250 (WTPE…DDDW). Positions 1021–1035 (AAQPLPRATPQPAAP) are enriched in pro residues. The segment covering 1036 to 1051 (QPAARAVPQPVAAVAA) has biased composition (low complexity). 2 stretches are compositionally biased toward pro residues: residues 1064-1077 (APPPPPPAAAPAPK) and 1139-1151 (TPKPAPPPPPPAA). One can recognise an SH3 domain in the interval 1076-1137 (PKKPTAKVLY…PEAYLEEQVA (62 aa)). Low complexity predominate over residues 1152–1170 (PRSTPAPATNGAAAAAKAK). Over residues 1201-1222 (VSMNSHDSSGGSGRGTPNSMSN) the composition is skewed to polar residues. The segment covering 1223–1232 (ASLAGGLAEA) has biased composition (low complexity).

The protein belongs to the TRAFAC class myosin-kinesin ATPase superfamily. Myosin family. Post-translationally, phosphorylation of the TEDS site (Ser-372) is required for the polarization of the actin cytoskeleton. Phosphorylation probably activates the myosin-I ATPase activity.

It is found in the cytoplasm. The protein resides in the cytoskeleton. It localises to the actin patch. Functionally, type-I myosin implicated in the organization of the actin cytoskeleton. Required for proper actin cytoskeleton polarization. At the cell cortex, assembles in patch-like structures together with proteins from the actin-polymerizing machinery and promotes actin assembly. Functions as actin nucleation-promoting factor (NPF) for the Arp2/3 complex. Plays an important role in polarized growth, spore germination, hyphal morphogenesis, and septal wall formation. This Neosartorya fischeri (strain ATCC 1020 / DSM 3700 / CBS 544.65 / FGSC A1164 / JCM 1740 / NRRL 181 / WB 181) (Aspergillus fischerianus) protein is Myosin-1 (myoA).